Reading from the N-terminus, the 356-residue chain is Arginine kinase 1 (356 aa).

Residues Val6–Gly91 form the Phosphagen kinase N-terminal domain. Substrate is bound at residue Gly64–Tyr68. The 238-residue stretch at Tyr119–Leu356 folds into the Phosphagen kinase C-terminal domain. Residues Ser122–Arg126 and His185 contribute to the ATP site. Glu225 contributes to the substrate binding site. Arg229 is an ATP binding site. Cys271 contacts substrate. ATP is bound by residues Arg280–His284 and Arg309–Glu314. Glu314 is a binding site for substrate.

Belongs to the ATP:guanido phosphotransferase family.

It carries out the reaction L-arginine + ATP = N(omega)-phospho-L-arginine + ADP + H(+). This Drosophila melanogaster (Fruit fly) protein is Arginine kinase 1.